Reading from the N-terminus, the 554-residue chain is MTDVKKSIRAGRGTELECLGWEQEAVLRMLRNNLDPEVAEKPEDLIVYGGIGKAARNWDAFHAIERSLKMLKDDETLLIQSGKPVGLFRTHSRAPRVLLANSVLVPKWADWEHFHDLEKKGLMMYGQMTAGSWIYIGSQGILQGTYETFAELARQHFGGSLKGTLTLTAGLGGMGGAQPLSVTMNDGVVIAVEADETRIDKRIETNYCDRKTASIDEALRWAEAARQAGEPLSIGLLGNAAEVHHELLNRGVHIDIVTDQTSAHDPLIGYIPAGYSLEEADRLRRDQPELYVRLSKQSMKKHVEAMLAFKKKGAVVFDYGNNIRQAAKDEGLADAFDFPGFVPAYIRPLFCEGKGPFRWAALSGDPEDIYRTDALLKELFPENQALHRWIDMAQKKVTFQGLPSRICWLGYGEREKMGLAINELVRNGELKAPIVIGRDHLDCGSVASPNRETEAMKDGSDAVGDWAVLNALINTASGASWVSFHHGGGVGMGYSLHAGMVAVADGSILAEQRLSRVLTSDPGMGIIRHADAGYEKAAQVAEEQDIMIPMKKER.

NAD(+) is bound by residues 49–50 (GG), Q127, 173–175 (GMG), E193, R198, 239–240 (NA), 260–264 (QTSAH), 270–271 (YI), and Y319. C407 is a catalytic residue. Position 489 (G489) interacts with NAD(+).

The protein belongs to the urocanase family. NAD(+) serves as cofactor.

The protein localises to the cytoplasm. It catalyses the reaction 4-imidazolone-5-propanoate = trans-urocanate + H2O. It functions in the pathway amino-acid degradation; L-histidine degradation into L-glutamate; N-formimidoyl-L-glutamate from L-histidine: step 2/3. Functionally, catalyzes the conversion of urocanate to 4-imidazolone-5-propionate. This Bacillus velezensis (strain DSM 23117 / BGSC 10A6 / LMG 26770 / FZB42) (Bacillus amyloliquefaciens subsp. plantarum) protein is Urocanate hydratase.